The primary structure comprises 363 residues: Cytochrome b (363 aa).

The next 4 helical transmembrane spans lie at 24 to 44, 68 to 90, 105 to 125, and 171 to 191; these read VGFS…CLAW, FVIR…IHIF, VWFI…IGYV, and LHVL…LHLF. Positions 74 and 88 each coordinate heme b. Residues His175 and His189 each contribute to the heme b site. Position 194 (His194) interacts with a ubiquinone. 4 helical membrane passes run 219–239, 287–307, 321–341, and 342–362; these read FYLR…YVIF, FLMV…ILWF, LILF…VLAY, and PIWM…VCRL.

Belongs to the cytochrome b family. The main subunits of complex b-c1 are: cytochrome b, cytochrome c1 and the Rieske protein. Heme b is required as a cofactor.

It is found in the mitochondrion inner membrane. In terms of biological role, component of the ubiquinol-cytochrome c reductase complex (complex III or cytochrome b-c1 complex) that is part of the mitochondrial respiratory chain. The b-c1 complex mediates electron transfer from ubiquinol to cytochrome c. Contributes to the generation of a proton gradient across the mitochondrial membrane that is then used for ATP synthesis. In Trypanosoma brucei brucei, this protein is Cytochrome b (MT-CYB).